The sequence spans 634 residues: Chaperone protein HtpG (634 aa).

Positions 1-342 (MSVETQKETL…SNDLSLNVSR (342 aa)) are a; substrate-binding. The segment at 343 to 559 (EILQKDPVID…EQDLGLQMRQ (217 aa)) is b. The tract at residues 560–634 (ILEASGQKVP…LNKLLVELSA (75 aa)) is c.

It belongs to the heat shock protein 90 family. In terms of assembly, homodimer.

It localises to the cytoplasm. Molecular chaperone. Has ATPase activity. The chain is Chaperone protein HtpG from Pseudomonas aeruginosa (strain ATCC 15692 / DSM 22644 / CIP 104116 / JCM 14847 / LMG 12228 / 1C / PRS 101 / PAO1).